Reading from the N-terminus, the 169-residue chain is NADH-quinone oxidoreductase subunit B (169 aa).

Positions 42, 43, 107, and 136 each coordinate [4Fe-4S] cluster.

Belongs to the complex I 20 kDa subunit family. As to quaternary structure, NDH-1 is composed of 14 different subunits. Subunits NuoB, C, D, E, F, and G constitute the peripheral sector of the complex. [4Fe-4S] cluster is required as a cofactor.

It localises to the cell inner membrane. It carries out the reaction a quinone + NADH + 5 H(+)(in) = a quinol + NAD(+) + 4 H(+)(out). NDH-1 shuttles electrons from NADH, via FMN and iron-sulfur (Fe-S) centers, to quinones in the respiratory chain. The immediate electron acceptor for the enzyme in this species is believed to be ubiquinone. Couples the redox reaction to proton translocation (for every two electrons transferred, four hydrogen ions are translocated across the cytoplasmic membrane), and thus conserves the redox energy in a proton gradient. The chain is NADH-quinone oxidoreductase subunit B from Sulfurimonas denitrificans (strain ATCC 33889 / DSM 1251) (Thiomicrospira denitrificans (strain ATCC 33889 / DSM 1251)).